Reading from the N-terminus, the 357-residue chain is Aspartate-semialdehyde dehydrogenase (357 aa).

NADP(+) contacts are provided by threonine 12, glycine 13, threonine 14, valine 15, serine 37, serine 40, leucine 84, and aspartate 85. The active-site Acyl-thioester intermediate is the cysteine 151. Glycine 183 contacts NADP(+). Histidine 247 serves as the catalytic Proton acceptor. A Phosphoserine modification is found at serine 323. Position 335 (asparagine 335) interacts with NADP(+).

It belongs to the aspartate-semialdehyde dehydrogenase family.

The protein resides in the cytoplasm. It is found in the cytosol. It localises to the nucleus. It catalyses the reaction L-aspartate 4-semialdehyde + phosphate + NADP(+) = 4-phospho-L-aspartate + NADPH + H(+). It participates in amino-acid biosynthesis; L-methionine biosynthesis via de novo pathway; L-homoserine from L-aspartate: step 2/3. The protein operates within amino-acid biosynthesis; L-threonine biosynthesis; L-threonine from L-aspartate: step 2/5. Catalyzes the NADPH-dependent formation of L-aspartate 4-semialdehyde (L-ASA) by the reductive dephosphorylation of 4-phospho-L-aspartate. Mediates the second step in the biosynthesis of amino acids that derive from aspartate (the aspartate family of amino acids), including methioinine and threonine, the latter of which is a precursor to isoleucine. The protein is Aspartate-semialdehyde dehydrogenase of Schizosaccharomyces pombe (strain 972 / ATCC 24843) (Fission yeast).